A 113-amino-acid chain; its full sequence is RING-box protein 2 (113 aa).

The segment at 1 to 26 (MADVEDGEEPCVLSSHSGSAGSKSGG) is disordered. A2 carries the N-acetylalanine modification. 12 residues coordinate Zn(2+): C50, C53, C61, C64, C73, C80, H82, H85, C87, C88, C99, and C102. An RING-type zinc finger spans residues 61 to 103 (CLRCQAENKQEDCVVVWGECNHSFHNCCMSLWVKQNNRCPLCQ).

Belongs to the RING-box family. Catalytic component of multiple cullin-5-RING E3 ubiquitin-protein ligase complexes (ECS complexes, also named CRL5 complexes) composed of CUL5, Elongin BC (ELOB and ELOC), RNF7/RBX2 and a variable SOCS box domain-containing protein as substrate-specific recognition component. Also interacts (with lower preference) with CUL1, CUL2, CUL3, CUL4A and CUL4B; additional evidence is however required to confirm this result in vivo. Interacts with UBE2F. Interacts with CSNK2B, the interaction is not affected by phosphorylation by CK2. May also interact with DCUN1D1, DCUN1D2, DCUN1D3, DCUN1D4 and DCUN1D5.

It is found in the cytoplasm. Its subcellular location is the nucleus. The enzyme catalyses S-ubiquitinyl-[E2 ubiquitin-conjugating enzyme]-L-cysteine + [acceptor protein]-L-lysine = [E2 ubiquitin-conjugating enzyme]-L-cysteine + N(6)-ubiquitinyl-[acceptor protein]-L-lysine.. The catalysed reaction is S-[NEDD8-protein]-yl-[E2 NEDD8-conjugating enzyme]-L-cysteine + [cullin]-L-lysine = [E2 NEDD8-conjugating enzyme]-L-cysteine + N(6)-[NEDD8-protein]-yl-[cullin]-L-lysine.. Its pathway is protein modification; protein ubiquitination. It participates in protein modification; protein neddylation. Catalytic component of multiple cullin-5-RING E3 ubiquitin-protein ligase complexes (ECS complexes), which mediate the ubiquitination and subsequent proteasomal degradation of target proteins. It is thereby involved in various biological processes, such as cell cycle progression, signal transduction and transcription. The functional specificity of the E3 ubiquitin-protein ligase ECS complexes depend on the variable SOCS box-containing substrate recognition component. Within ECS complexes, RNF7/RBX2 recruits the E2 ubiquitination enzyme to the complex via its RING-type and brings it into close proximity to the substrate. Catalytic subunit of various SOCS-containing ECS complexes, such as the ECS(SOCS7) complex, that regulate reelin signaling by mediating ubiquitination and degradation of DAB1. The ECS(SOCS2) complex mediates the ubiquitination and subsequent proteasomal degradation of phosphorylated EPOR and GHR. Promotes ubiquitination and degradation of NF1, thereby regulating Ras protein signal transduction. As part of the ECS(ASB9) complex, catalyzes ubiquitination and degradation of CKB. The ECS(SPSB3) complex catalyzes ubiquitination of nuclear CGAS. As part of the ECS(RAB40C) complex, mediates ANKRD28 ubiquitination and degradation, thereby inhibiting protein phosphatase 6 (PP6) complex activity and focal adhesion assembly during cell migration. As part of some ECS complex, catalyzes 'Lys-11'-linked ubiquitination and degradation of BTRC. ECS complexes and ARIH2 collaborate in tandem to mediate ubiquitination of target proteins; ARIH2 mediating addition of the first ubiquitin on CRLs targets. Specifically catalyzes the neddylation of CUL5 via its interaction with UBE2F. Does not catalyze neddylation of other cullins (CUL1, CUL2, CUL3, CUL4A or CUL4B). May play a role in protecting cells from apoptosis induced by redox agents. This is RING-box protein 2 from Mus musculus (Mouse).